A 370-amino-acid chain; its full sequence is D-alanine--D-alanine ligase (370 aa).

One can recognise an ATP-grasp domain in the interval 144 to 352 (KKIFADAGIP…YGALIERLVD (209 aa)). 177-232 (EEVLTYPVFVKPANLGSSVGISKATNKKELADAMTEAFLYDRRVVVEQGVVAREIE) is an ATP binding site. Mg(2+)-binding residues include Asp306, Glu319, and Asn321.

This sequence belongs to the D-alanine--D-alanine ligase family. It depends on Mg(2+) as a cofactor. Mn(2+) serves as cofactor.

It is found in the cytoplasm. It carries out the reaction 2 D-alanine + ATP = D-alanyl-D-alanine + ADP + phosphate + H(+). The protein operates within cell wall biogenesis; peptidoglycan biosynthesis. In terms of biological role, cell wall formation. In Listeria monocytogenes serotype 4b (strain F2365), this protein is D-alanine--D-alanine ligase.